The following is a 387-amino-acid chain: 3-ketoacyl-CoA thiolase (387 aa).

Cys-91 serves as the catalytic Acyl-thioester intermediate. Active-site proton acceptor residues include His-343 and Cys-373.

The protein belongs to the thiolase-like superfamily. Thiolase family. Heterotetramer of two alpha chains (FadB) and two beta chains (FadA).

It is found in the cytoplasm. The catalysed reaction is an acyl-CoA + acetyl-CoA = a 3-oxoacyl-CoA + CoA. It functions in the pathway lipid metabolism; fatty acid beta-oxidation. In terms of biological role, catalyzes the final step of fatty acid oxidation in which acetyl-CoA is released and the CoA ester of a fatty acid two carbons shorter is formed. In Cronobacter sakazakii (strain ATCC BAA-894) (Enterobacter sakazakii), this protein is 3-ketoacyl-CoA thiolase.